We begin with the raw amino-acid sequence, 164 residues long: General odorant-binding protein 1 (164 aa).

The N-terminal stretch at 1–19 is a signal peptide; it reads MPGVLRALLLLAAAAPLLA. 3 cysteine pairs are disulfide-bonded: Cys-38/Cys-73, Cys-69/Cys-127, and Cys-116/Cys-136.

It belongs to the PBP/GOBP family. As to expression, antenna.

Present in the aqueous fluid surrounding olfactory sensory dendrites and are thought to aid in the capture and transport of hydrophobic odorants into and through this fluid. The protein is General odorant-binding protein 1 of Heliothis virescens (Tobacco budworm moth).